The following is a 419-amino-acid chain: Transcription termination factor Rho (419 aa).

The 76-residue stretch at 48-123 (DIFGDGVLEI…LKVNKVNYDK (76 aa)) folds into the Rho RNA-BD domain. RNA-binding stretches follow at residues 61–66 (GFGFLR), 78–80 (DIY), and 108–110 (ERY). ATP contacts are provided by residues 169–174 (GRGQRG), 181–186 (KAGKTM), and arginine 212. An RNA-binding 2 region spans residues 284–288 (VLTGG).

It belongs to the Rho family. In terms of assembly, homohexamer. The homohexamer assembles into an open ring structure.

Functionally, facilitates transcription termination by a mechanism that involves Rho binding to the nascent RNA, activation of Rho's RNA-dependent ATPase activity, and release of the mRNA from the DNA template. This Buchnera aphidicola subsp. Baizongia pistaciae (strain Bp) protein is Transcription termination factor Rho.